The primary structure comprises 199 residues: Probable chemoreceptor glutamine deamidase CheD (199 aa).

The protein belongs to the CheD family.

The enzyme catalyses L-glutaminyl-[protein] + H2O = L-glutamyl-[protein] + NH4(+). In terms of biological role, probably deamidates glutamine residues to glutamate on methyl-accepting chemotaxis receptors (MCPs), playing an important role in chemotaxis. This chain is Probable chemoreceptor glutamine deamidase CheD, found in Cereibacter sphaeroides (Rhodobacter sphaeroides).